Reading from the N-terminus, the 119-residue chain is Enhancer of yellow 2 transcription factor (119 aa).

The segment at 93–119 (LTENETEGTDNHDDDEDDEDENGTEDN) is disordered. A compositionally biased stretch (acidic residues) spans 96 to 119 (NETEGTDNHDDDEDDEDENGTEDN).

Belongs to the ENY2 family. As to quaternary structure, component of the nuclear pore complex (NPC)-associated AMEX complex (anchoring and mRNA export complex), composed of at least e(y)2 and xmas-2. Component of the SAGA transcription coactivator-HAT complexes, at least composed of Ada2b, e(y)2, Pcaf/Gcn5, Taf10 and Nipped-A/Trrap. Within the SAGA complex, e(y)2, Sgf11, and not/nonstop form an additional subcomplex of SAGA called the DUB module (deubiquitination module). Component of the THO complex, composed of at least e(y)2, HPR1, THO2, THOC5, THOC6 and THOC7. Interacts with e(y)1. Interacts with su(Hw) (via zinc fingers). Interacts with xmas-2; required for localization to the nuclear periphery. Interacts with the nuclear pore complex (NPC).

It is found in the nucleus. Its subcellular location is the nucleoplasm. It localises to the cytoplasm. Functionally, involved in mRNA export coupled transcription activation by association with both the AMEX and the SAGA complexes. The SAGA complex is a multiprotein complex that activates transcription by remodeling chromatin and mediating histone acetylation and deubiquitination. Within the SAGA complex, participates in a subcomplex that specifically deubiquitinates histone H2B. The SAGA complex is recruited to specific gene promoters by activators, where it is required for transcription. Required for nuclear receptor-mediated transactivation. Involved in transcription elongation by recruiting the THO complex onto nascent mRNA. The AMEX complex functions in docking export-competent ribonucleoprotein particles (mRNPs) to the nuclear entrance of the nuclear pore complex (nuclear basket). AMEX participates in mRNA export and accurate chromatin positioning in the nucleus by tethering genes to the nuclear periphery. This chain is Enhancer of yellow 2 transcription factor, found in Drosophila willistoni (Fruit fly).